The primary structure comprises 437 residues: Ribosomal protein uS12 methylthiotransferase RimO (437 aa).

The region spanning 4–114 (PRIGFISLGC…VMNAVHEHLP (111 aa)) is the MTTase N-terminal domain. [4Fe-4S] cluster contacts are provided by cysteine 13, cysteine 49, cysteine 78, cysteine 145, cysteine 149, and cysteine 152. The region spanning 131–368 (LTPRHYAYLK…MEVQERISAA (238 aa)) is the Radical SAM core domain. In terms of domain architecture, TRAM spans 371 to 437 (RTRIGRTETV…AHDLWARLAD (67 aa)).

Belongs to the methylthiotransferase family. RimO subfamily. The cofactor is [4Fe-4S] cluster.

It is found in the cytoplasm. The catalysed reaction is L-aspartate(89)-[ribosomal protein uS12]-hydrogen + (sulfur carrier)-SH + AH2 + 2 S-adenosyl-L-methionine = 3-methylsulfanyl-L-aspartate(89)-[ribosomal protein uS12]-hydrogen + (sulfur carrier)-H + 5'-deoxyadenosine + L-methionine + A + S-adenosyl-L-homocysteine + 2 H(+). In terms of biological role, catalyzes the methylthiolation of an aspartic acid residue of ribosomal protein uS12. This Methylococcus capsulatus (strain ATCC 33009 / NCIMB 11132 / Bath) protein is Ribosomal protein uS12 methylthiotransferase RimO.